A 178-amino-acid chain; its full sequence is Hypoxanthine phosphoribosyltransferase (178 aa).

The diphosphate site is built by R43 and G44. E99 is a binding site for GMP. E99 serves as a coordination point for IMP. Mg(2+)-binding residues include E99 and D100. The Proton acceptor role is filled by D103. Residues 103-108 (DSGNTL), K131, and D159 each bind GMP. IMP contacts are provided by residues 103–108 (DSGNTL) and K131. Diphosphate is bound at residue R165.

Belongs to the purine/pyrimidine phosphoribosyltransferase family. Homotetramer. Requires Mg(2+) as cofactor.

The protein resides in the cytoplasm. It carries out the reaction IMP + diphosphate = hypoxanthine + 5-phospho-alpha-D-ribose 1-diphosphate. The catalysed reaction is GMP + diphosphate = guanine + 5-phospho-alpha-D-ribose 1-diphosphate. It functions in the pathway purine metabolism; IMP biosynthesis via salvage pathway; IMP from hypoxanthine: step 1/1. Functionally, purine salvage pathway enzyme which catalyzes the transfer of the ribosyl-5-phosphate group from 5-phospho-alpha-D-ribose 1-diphosphate (PRPP) to the N9 position of hypoxanthine to yield IMP (inosine 5'-monophosphate). To a lesser extent, can also act on guanine leading to GMP, but shows a highly less efficient activity with xanthine. In Salmonella typhimurium (strain LT2 / SGSC1412 / ATCC 700720), this protein is Hypoxanthine phosphoribosyltransferase (hpt).